The sequence spans 556 residues: Zinc finger protein 18 (556 aa).

An SCAN box domain is found at 41–123; it reads RQLFRQFRYQ…TLVESLKGEP (83 aa). A disordered region spans residues 169-195; that stretch reads QDLPLQNSSSATGELLSHGVKEESDME. Residues 218–291 enclose the KRAB domain; that stretch reads ELGTAVLPPL…HLHGAEKMAR (74 aa). C2H2-type zinc fingers lie at residues 415–437, 443–465, 471–493, 499–521, and 527–549; these read PTCR…QRTH, FHCH…QRTH, CKCD…EKIH, YKCP…QRVH, and YKCT…QRSH.

The protein belongs to the krueppel C2H2-type zinc-finger protein family.

It is found in the nucleus. Its function is as follows. May be involved in transcriptional regulation. The sequence is that of Zinc finger protein 18 (Znf18) from Mus musculus (Mouse).